Consider the following 544-residue polypeptide: Prolyl 4-hydroxylase subunit alpha-3 (544 aa).

An N-terminal signal peptide occupies residues 1–24 (MGPGARLAALLVLLKLGVGDPAAA). Residues 227-260 (EDALDYLAFACYQVGNVSCALSLSREFLVYSPDN) form a TPR repeat. N-linked (GlcNAc...) asparagine glycosylation is present at N242. One can recognise a Fe2OG dioxygenase domain in the interval 422–529 (YAEYLQVVNY…KWVANKWIHE (108 aa)). The Fe cation site is built by H440 and D442. N482 carries N-linked (GlcNAc...) asparagine glycosylation. H510 contributes to the Fe cation binding site. Residue K520 participates in 2-oxoglutarate binding.

It belongs to the P4HA family. Heterotetramer of two alpha-3 chains and two beta chains (the beta chain is the multi-functional PDI). The cofactor is Fe(2+). L-ascorbate is required as a cofactor. In terms of processing, N-glycosylation plays no role in the catalytic activity.

The protein resides in the endoplasmic reticulum lumen. It carries out the reaction L-prolyl-[collagen] + 2-oxoglutarate + O2 = trans-4-hydroxy-L-prolyl-[collagen] + succinate + CO2. In terms of biological role, catalyzes the post-translational formation of 4-hydroxyproline in -Xaa-Pro-Gly- sequences in collagens and other proteins. This chain is Prolyl 4-hydroxylase subunit alpha-3 (P4ha3), found in Rattus norvegicus (Rat).